Consider the following 259-residue polypeptide: Putative zinc metalloprotease Rip2 (259 aa).

Transmembrane regions (helical) follow at residues 14–34 and 39–59; these read PIFL…WIAA and PLSY…SLCL. Residue His60 participates in Zn(2+) binding. Glu61 is a catalytic residue. His64 is a Zn(2+) binding site. The next 4 helical transmembrane spans lie at 96–116, 129–149, 159–179, and 203–223; these read LGLP…GAVY, IVSL…LGLT, VFWS…VLNL, and LAPA…TPAL.

Belongs to the peptidase M50B family. The cofactor is Zn(2+).

The protein resides in the cell membrane. This is Putative zinc metalloprotease Rip2 (rip2) from Mycolicibacterium smegmatis (strain ATCC 700084 / mc(2)155) (Mycobacterium smegmatis).